A 473-amino-acid chain; its full sequence is Uronate isomerase (473 aa).

Belongs to the metallo-dependent hydrolases superfamily. Uronate isomerase family.

It catalyses the reaction D-glucuronate = D-fructuronate. It carries out the reaction aldehydo-D-galacturonate = keto-D-tagaturonate. It participates in carbohydrate metabolism; pentose and glucuronate interconversion. In Bacillus licheniformis (strain ATCC 14580 / DSM 13 / JCM 2505 / CCUG 7422 / NBRC 12200 / NCIMB 9375 / NCTC 10341 / NRRL NRS-1264 / Gibson 46), this protein is Uronate isomerase.